The sequence spans 165 residues: Putative inactive neutral ceramidase B (165 aa).

It belongs to the neutral ceramidase family. As to expression, ubiquitous. Expression is reduced with increasing age and in late-onset Alzheimer disease (LOAD) patients. This reduction is even more pronounced in patients with an affected mother.

In Homo sapiens (Human), this protein is Putative inactive neutral ceramidase B.